A 142-amino-acid chain; its full sequence is Cell division protein SepF (142 aa).

Belongs to the SepF family. In terms of assembly, homodimer. Interacts with FtsZ.

The protein localises to the cytoplasm. In terms of biological role, cell division protein that is part of the divisome complex and is recruited early to the Z-ring. Probably stimulates Z-ring formation, perhaps through the cross-linking of FtsZ protofilaments. Its function overlaps with FtsA. The chain is Cell division protein SepF from Geobacillus kaustophilus (strain HTA426).